Consider the following 219-residue polypeptide: ADP-sugar pyrophosphatase (219 aa).

The residue at position 1 (Met1) is an N-acetylmethionine. Residues Ser3 and Ser10 each carry the phosphoserine modification. Trp28 serves as a coordination point for substrate. A Glycyl lysine isopeptide (Lys-Gly) (interchain with G-Cter in SUMO2) cross-link involves residue Lys42. Thr45 is subject to Phosphothreonine. Substrate-binding positions include 46 to 47 and Arg51; that span reads WE. The region spanning 57–197 is the Nudix hydrolase domain; it reads QTADGVAVIP…EEHLTVDARV (141 aa). Residue Tyr74 is modified to Phosphotyrosine. Arg84 is a binding site for substrate. Residue Ala96 participates in Mg(2+) binding. The Nudix box signature appears at 97 to 118; sequence GLIDDGETPEAAALRELEEETG. Leu98 serves as a coordination point for substrate. Residues Glu112 and Glu116 each coordinate Mg(2+). Asp133 serves as a coordination point for substrate. Mg(2+) is bound at residue Glu166. N6-acetyllysine occurs at positions 210 and 218.

Belongs to the Nudix hydrolase family. Homodimer. Interacts with PARG. It depends on Mg(2+) as a cofactor. Phosphorylation at Thr-45 is required for homodimer stability; dephosphorylation results in destabilization of the homodimer. Dephosphorylation at Thr-45 promotes the ATP-synthesis activity. In terms of tissue distribution, widely expressed. Most abundant in liver.

The protein localises to the nucleus. The enzyme catalyses D-ribose 5-phosphate + ATP + H(+) = ADP-D-ribose + diphosphate. It carries out the reaction ADP-D-ribose + H2O = D-ribose 5-phosphate + AMP + 2 H(+). It catalyses the reaction 8-oxo-dGDP + H2O = 8-oxo-dGMP + phosphate + H(+). Its function is as follows. Enzyme that can either act as an ADP-sugar pyrophosphatase in absence of diphosphate or catalyze the synthesis of ATP in presence of diphosphate. In absence of diphosphate, hydrolyzes with similar activities various modified nucleoside diphosphates such as ADP-ribose, ADP-mannose, ADP-glucose, 8-oxo-GDP and 8-oxo-dGDP. Can also hydrolyze other nucleotide sugars with low activity. In presence of diphosphate, mediates the synthesis of ATP in the nucleus by catalyzing the conversion of ADP-ribose to ATP and ribose 5-phosphate. Nuclear ATP synthesis takes place when dephosphorylated at Thr-45. Nuclear ATP generation is required for extensive chromatin remodeling events that are energy-consuming. Does not play a role in U8 snoRNA decapping activity. Binds U8 snoRNA. In Homo sapiens (Human), this protein is ADP-sugar pyrophosphatase (NUDT5).